The chain runs to 447 residues: NADH-ubiquinone oxidoreductase chain 4 (447 aa).

Helical transmembrane passes span Ile28 to Ile48, Met56 to Ser76, Tyr85 to Ser105, Phe110 to Trp130, Ile141 to Ile161, Phe183 to Leu203, Pro213 to Leu233, Phe246 to Leu266, Ala273 to Met293, Ser301 to Ile321, Ser343 to Leu365, Leu380 to Phe400, and Tyr409 to Leu431.

This sequence belongs to the complex I subunit 4 family.

Its subcellular location is the mitochondrion membrane. It carries out the reaction a ubiquinone + NADH + 5 H(+)(in) = a ubiquinol + NAD(+) + 4 H(+)(out). Its function is as follows. Core subunit of the mitochondrial membrane respiratory chain NADH dehydrogenase (Complex I) that is believed to belong to the minimal assembly required for catalysis. Complex I functions in the transfer of electrons from NADH to the respiratory chain. The immediate electron acceptor for the enzyme is believed to be ubiquinone. This chain is NADH-ubiquinone oxidoreductase chain 4, found in Aedes aegypti (Yellowfever mosquito).